Consider the following 388-residue polypeptide: 3beta-hydroxysteroid dehydrogenase dhs-16 (388 aa).

The chain crosses the membrane as a helical span at residues 2–22 (LELIYILPLLCFVYFLFRRFV). Tyrosine 188 (proton acceptor) is an active-site residue. 2 helical membrane passes run 300–320 (AIFM…WILA) and 346–366 (IQWI…TIFF).

It belongs to the short-chain dehydrogenases/reductases (SDR) family. In terms of tissue distribution, strongly expressed in the hypodermis and posterior pharyngeal bulb and in a number of unidentified neurons of the head and tail.

It localises to the membrane. It catalyses the reaction lathosterol + NAD(+) = 5alpha-cholest-7-en-3-one + NADH + H(+). Its pathway is steroid hormone biosynthesis; dafachronic acid biosynthesis. Its function is as follows. 3beta-hydroxysteroid dehydrogenase that converts 3beta-hydroxysteroids to 3-ketosteroids, an essential step in the production of dafachronic acids from cholesterol. Catalyzes the dehydrogenation of lathosterol (5alpha-cholest-7-en-3beta-ol) to lathosterone (5alpha-cholest-7-en-3-one), a step required for maximal biosynthesis of Delta(7)-dafachronic acid. Dafachronic acids act as ligands and bind directly to the nuclear hormone receptor (NHR) daf-12, suppressing dauer formation and inducing reproductive growth, they can also regulate C.elegans lifespan. In Caenorhabditis elegans, this protein is 3beta-hydroxysteroid dehydrogenase dhs-16 (dhs-16).